We begin with the raw amino-acid sequence, 328 residues long: D-alanine--D-alanine ligase (328 aa).

One can recognise an ATP-grasp domain in the interval 118 to 317 (LSVLTKFNIP…MPQMLDNEIT (200 aa)). Residue 146–201 (KKALGLPFFVKPNQSGSSLGVSKVDALDQLEKALEFAFAEDNEILIESYLNGTEVS) coordinates ATP. Residues Asp272, Glu284, and Asn286 each coordinate Mg(2+).

This sequence belongs to the D-alanine--D-alanine ligase family. The cofactor is Mg(2+). Mn(2+) is required as a cofactor.

Its subcellular location is the cytoplasm. The enzyme catalyses 2 D-alanine + ATP = D-alanyl-D-alanine + ADP + phosphate + H(+). Its pathway is cell wall biogenesis; peptidoglycan biosynthesis. In terms of biological role, cell wall formation. In Flavobacterium psychrophilum (strain ATCC 49511 / DSM 21280 / CIP 103535 / JIP02/86), this protein is D-alanine--D-alanine ligase.